The primary structure comprises 164 residues: MRLTSKGRYAVTAMLDVALHSQDGPVPLADISERQGISLSYLEQLFSRLRKNGLVASVRGPGGGYLLGKDASAIAVGAVITAVDESVDATRCQGKEGCQGGDRCLTHTLWRDLSERISSFLNNITLAELVNNQDILEVADRQNNDTRRTANGRPQETINVNLRA.

The HTH rrf2-type domain occupies 2–131 (RLTSKGRYAV…NNITLAELVN (130 aa)). The H-T-H motif DNA-binding region spans 28–51 (LADISERQGISLSYLEQLFSRLRK). The [2Fe-2S] cluster site is built by cysteine 92, cysteine 98, and cysteine 104. A disordered region spans residues 143–164 (NNDTRRTANGRPQETINVNLRA). A compositionally biased stretch (polar residues) spans 152 to 164 (GRPQETINVNLRA).

[2Fe-2S] cluster serves as cofactor.

Its function is as follows. Regulates the transcription of several operons and genes involved in the biogenesis of Fe-S clusters and Fe-S-containing proteins. The polypeptide is HTH-type transcriptional regulator IscR (Yersinia enterocolitica serotype O:8 / biotype 1B (strain NCTC 13174 / 8081)).